Reading from the N-terminus, the 557-residue chain is Formate--tetrahydrofolate ligase (557 aa).

Residue 67-74 (TPAGEGKT) coordinates ATP.

This sequence belongs to the formate--tetrahydrofolate ligase family.

The catalysed reaction is (6S)-5,6,7,8-tetrahydrofolate + formate + ATP = (6R)-10-formyltetrahydrofolate + ADP + phosphate. Its pathway is one-carbon metabolism; tetrahydrofolate interconversion. This Cereibacter sphaeroides (strain KD131 / KCTC 12085) (Rhodobacter sphaeroides) protein is Formate--tetrahydrofolate ligase.